We begin with the raw amino-acid sequence, 259 residues long: Phospholipase YtpA (259 aa).

The Nucleophile role is filled by serine 88. Residues aspartate 206 and histidine 236 each act as charge relay system in the active site.

It belongs to the AB hydrolase superfamily.

Its pathway is antibiotic biosynthesis; bacilysocin biosynthesis. In terms of biological role, phospholipase involved in the biosynthesis of the antibiotic bacilysocin. It probably catalyzes the hydrolysis of the 2-sn-acyl moiety of phosphatidylglycerol to produce bacilysocin (lysophosphatidylglycerol). Is also able to catalyze the hydrolysis reaction of one acyl bond in phosphatidylcholine in vitro (actual cleavage point is unknown), resulting in lysophosphatidylcholine. In Bacillus subtilis (strain 168), this protein is Phospholipase YtpA (ytpA).